Consider the following 210-residue polypeptide: Redox-sensing transcriptional repressor Rex (210 aa).

The segment at residues 17 to 56 (KYHRYLGNLMRNDVDRISSKELSEKIGFTASQIRQDLNCF) is a DNA-binding region (H-T-H motif). An NAD(+)-binding site is contributed by 91–96 (GAGNIG).

The protein belongs to the transcriptional regulatory Rex family. In terms of assembly, homodimer.

It localises to the cytoplasm. Modulates transcription in response to changes in cellular NADH/NAD(+) redox state. The sequence is that of Redox-sensing transcriptional repressor Rex from Clostridium kluyveri (strain ATCC 8527 / DSM 555 / NBRC 12016 / NCIMB 10680 / K1).